Here is a 328-residue protein sequence, read N- to C-terminus: Cytochrome c biogenesis protein CcsA (328 aa).

The next 8 helical transmembrane spans lie at 13–33 (ISFS…LVNL), 46–66 (GIVI…IYSG), 73–93 (LYES…VSYF), 101–121 (LNAI…SGLL), 146–166 (MILG…LLVI), 234–254 (IISL…VWAN), 263–283 (WDPK…YLHI), and 295–315 (AIVA…VNLL).

This sequence belongs to the CcmF/CycK/Ccl1/NrfE/CcsA family. May interact with Ccs1.

Its subcellular location is the plastid. It is found in the chloroplast thylakoid membrane. Functionally, required during biogenesis of c-type cytochromes (cytochrome c6 and cytochrome f) at the step of heme attachment. This is Cytochrome c biogenesis protein CcsA from Barbarea verna (Land cress).